We begin with the raw amino-acid sequence, 396 residues long: Phosphoglycerate kinase (396 aa).

Residues 22-24 (DLN), Arg-37, 60-63 (HFGR), Arg-118, and Arg-151 contribute to the substrate site. ATP-binding positions include Lys-201, Glu-323, and 353–356 (GGDT).

This sequence belongs to the phosphoglycerate kinase family. In terms of assembly, monomer.

Its subcellular location is the cytoplasm. The enzyme catalyses (2R)-3-phosphoglycerate + ATP = (2R)-3-phospho-glyceroyl phosphate + ADP. It participates in carbohydrate degradation; glycolysis; pyruvate from D-glyceraldehyde 3-phosphate: step 2/5. This chain is Phosphoglycerate kinase, found in Xanthobacter autotrophicus (strain ATCC BAA-1158 / Py2).